A 160-amino-acid chain; its full sequence is Serine-protein kinase RsbW (160 aa).

This sequence belongs to the anti-sigma-factor family.

It catalyses the reaction L-seryl-[protein] + ATP = O-phospho-L-seryl-[protein] + ADP + H(+). The enzyme catalyses L-threonyl-[protein] + ATP = O-phospho-L-threonyl-[protein] + ADP + H(+). In terms of biological role, negative regulator of sigma-B activity. Phosphorylates and inactivates its specific antagonist protein, RsbV. Upon phosphorylation of RsbV, RsbW is released and binds to sigma-B, thereby blocking its ability to form an RNA polymerase holoenzyme (E-sigma-B). The chain is Serine-protein kinase RsbW from Bacillus cereus (strain B4264).